Consider the following 299-residue polypeptide: Ent-kaurene oxidase-like protein 1 (299 aa).

A helical membrane pass occupies residues 16 to 36 (AVVGVFVAAAVVGGFVAAVAL).

Belongs to the cytochrome P450 family. In terms of tissue distribution, expressed in roots and panicles.

The protein localises to the membrane. The protein is Ent-kaurene oxidase-like protein 1 of Oryza sativa subsp. japonica (Rice).